The sequence spans 401 residues: Nicotinate phosphoribosyltransferase (401 aa).

H221 carries the post-translational modification Phosphohistidine; by autocatalysis.

It belongs to the NAPRTase family. In terms of processing, transiently phosphorylated on a His residue during the reaction cycle. Phosphorylation strongly increases the affinity for substrates and increases the rate of nicotinate D-ribonucleotide production. Dephosphorylation regenerates the low-affinity form of the enzyme, leading to product release.

The catalysed reaction is nicotinate + 5-phospho-alpha-D-ribose 1-diphosphate + ATP + H2O = nicotinate beta-D-ribonucleotide + ADP + phosphate + diphosphate. The protein operates within cofactor biosynthesis; NAD(+) biosynthesis; nicotinate D-ribonucleotide from nicotinate: step 1/1. Catalyzes the synthesis of beta-nicotinate D-ribonucleotide from nicotinate and 5-phospho-D-ribose 1-phosphate at the expense of ATP. This Edwardsiella ictaluri (strain 93-146) protein is Nicotinate phosphoribosyltransferase.